We begin with the raw amino-acid sequence, 167 residues long: Sporulation membrane protein YtrI (167 aa).

Residues 15-35 (FFAGMMCGAVISWFFFLFTYG) traverse the membrane as a helical segment.

It localises to the cell membrane. Involved in sporulation. This chain is Sporulation membrane protein YtrI (ytrI), found in Bacillus subtilis (strain 168).